Reading from the N-terminus, the 244-residue chain is L-xylulose reductase (244 aa).

Met1 carries the post-translational modification N-acetylmethionine. 11–39 (LVTGAGKGIGRSTVLALQAAGAHVVAVSR) lines the NADP(+) pocket. Arg21 carries the omega-N-methylarginine modification. A Phosphoserine modification is found at Ser46. Residue Ser136 coordinates substrate. Residue Tyr149 is the Proton acceptor of the active site. Lys153 is an active-site residue.

It belongs to the short-chain dehydrogenases/reductases (SDR) family. As to quaternary structure, homotetramer. In terms of tissue distribution, highly expressed in kidney and liver. Expressed in epididymis. Weakly expressed in brain, heart, lung, spleen and testis.

The protein resides in the membrane. It localises to the cytoplasmic vesicle. The protein localises to the secretory vesicle. It is found in the acrosome. The catalysed reaction is xylitol + NADP(+) = L-xylulose + NADPH + H(+). Functionally, catalyzes the NADPH-dependent reduction of several pentoses, tetroses, trioses, alpha-dicarbonyl compounds and L-xylulose. Participates in the uronate cycle of glucose metabolism. May play a role in the water absorption and cellular osmoregulation in the proximal renal tubules by producing xylitol, an osmolyte, thereby preventing osmolytic stress from occurring in the renal tubules. This Mesocricetus auratus (Golden hamster) protein is L-xylulose reductase (DCXR).